The chain runs to 58 residues: MKRQKRDRLDRAFAKGFQAGVGGRSKEMCPYSNLDSRSQWLGGWREGVDGRITGLFTK.

This sequence belongs to the ribosome modulation factor family.

The protein resides in the cytoplasm. In terms of biological role, during stationary phase, converts 70S ribosomes to an inactive dimeric form (100S ribosomes). This chain is Ribosome modulation factor, found in Shewanella amazonensis (strain ATCC BAA-1098 / SB2B).